A 355-amino-acid chain; its full sequence is NAD-dependent protein deacylase sirtuin-6 (355 aa).

S2 carries the post-translational modification N-acetylserine. S10 is modified (phosphoserine; by MAPK8). A Deacetylase sirtuin-type domain is found at 27 to 272 (PEELERKVWE…TRLMKHLGLE (246 aa)). An N6-acetyllysine modification is found at K33. NAD(+) contacts are provided by A53, T57, F64, R65, W71, Q113, and H133. H133 (proton acceptor) is an active-site residue. Residues C141, C144, and C166 each contribute to the Zn(2+) site. A Glycyl lysine isopeptide (Lys-Gly) (interchain with G-Cter in ubiquitin) cross-link involves residue K170. Residue C177 participates in Zn(2+) binding. G214, S216, N240, Q242, and V258 together coordinate NAD(+). The interval 284–355 (RALPPLPRPP…KRVKAKAVPS (72 aa)) is disordered. Positions 287 to 296 (PPLPRPPTPK) are enriched in pro residues. T294 bears the Phosphothreonine mark. Phosphoserine is present on residues S303 and S330. Over residues 343–355 (RPPKRVKAKAVPS) the composition is skewed to basic residues.

This sequence belongs to the sirtuin family. Class IV subfamily. Homodimer; binds to nucleosomes and DNA ends as a homodimer. Interacts with RELA; interferes with RELA binding to target DNA. Interacts with SMARCA5; promoting recruitment of SMARCA5/SNF2H to double-strand breaks (DSBs) sites. Interacts with the mTORC2 complex; preventing the ability of SIRT6 to deacetylate FOXO1. Interacts with the CLOCK-BMAL1 complex; recruited by the CLOCK-BMAL1 complex to regulate expression of clock-controlled genes. Interacts with CSNK2A2; preventing CSNK2A2 localization to the nucleus. In terms of assembly, (Microbial infection) Interacts with Kaposi's sarcoma-associated herpesvirus protein VIRF-1; this interaction prevents SIRT6 deubiquitination by USP10. It depends on Zn(2+) as a cofactor. In terms of processing, acetylated at Lys-33. Deacetylation at Lys-33 by SIRT1 promotes homomultimerization and binding to double-strand breaks (DSBs) sites. Phosphorylation at Ser-10 by MAPK8/JNK1 in response to oxidative stress stimulates the mono-ADP-ribosyltransferase activity on PARP1, leading to PARP1 recruitment to double-strand breaks (DSBs). Post-translationally, monoubiquitinated at Lys-170 by STUB1/CHIP, preventing its degradation by the proteasome. Deubiquitinated by USP10, also preventing its degradation by the proteasome. In terms of processing, sumoylated, leading to specifically decrease ability to deacetylate histone H3 at 'Lys-56' (H3K56ac).

It localises to the nucleus. The protein localises to the chromosome. It is found in the telomere. The protein resides in the endoplasmic reticulum. It carries out the reaction N(6)-acetyl-L-lysyl-[protein] + NAD(+) + H2O = 2''-O-acetyl-ADP-D-ribose + nicotinamide + L-lysyl-[protein]. It catalyses the reaction N(6)-tetradecanoyl-L-lysyl-[protein] + NAD(+) + H2O = 2''-O-tetradecanoyl-ADP-D-ribose + nicotinamide + L-lysyl-[protein]. The enzyme catalyses N(6)-hexadecanoyl-L-lysyl-[protein] + NAD(+) + H2O = 2''-O-hexadecanoyl-ADP-D-ribose + nicotinamide + L-lysyl-[protein]. The catalysed reaction is L-lysyl-[protein] + NAD(+) = N(6)-(ADP-D-ribosyl)-L-lysyl-[protein] + nicotinamide + H(+). It carries out the reaction L-arginyl-[protein] + NAD(+) = N(omega)-(ADP-D-ribosyl)-L-arginyl-[protein] + nicotinamide + H(+). Its activity is regulated as follows. Compared to the defatty-acylase activity, the protein deacetylase activity is weak in vitro, and requires activation. The histone deacetylase activity is strongly activated upon binding to nucleosomes and chromatin in vivo. Two molecules of SIRT6 associate with the acidic patch of one nucleosome, while the C-terminal disordered region of SIRT6 associates with nucleosomal DNA, leading to efficient histone deacetylation. The protein-lysine deacetylase activity is also activated by long-chain free fatty-acids. The histone deacetylase activity is specifically repressed by long non-coding RNA lncPRESS1, which binds to SIRT6 and prevents chromatin-binding, thereby promoting stem cell pluripotency. Due to its essential role as tumor suppressor and involvement in DNA repair and life span, extensive research is made for the identification of small compound regulators of SIRT6. Nitro-fatty acids (nitro-oleic acid and nitro-conjugated linoleic acid) strongly stimulate the protein-lysine deacetylase activity by forming a covalent Michael adduct formation with Cys-18. Activated by UBCS039 (4-(pyridin-3-yl)-4,5- dihydropyrrolo[1,2-a]quinoxaline). Inhibited by non-selective hydroxamate trichostatin A inhibitor. Deacetylase activity is activated by fluvastatin and quercetin-based compounds. The protein-lysine deacetylase activity, but not the defatty-acylase activity, is specifically activated by MDL-800 and MDL-801 activators in vivo, enhancing the histone deacetylase and tumor suppressor activities. MDL-800 and MDL-801 selectively activate SIRT6 and not other members of the sirtuin family. The binding-mode of MDL-801 is however subject to discussion. Functionally, NAD-dependent protein deacetylase, deacylase and mono-ADP-ribosyltransferase that plays an essential role in DNA damage repair, telomere maintenance, metabolic homeostasis, inflammation, tumorigenesis and aging. Displays protein-lysine deacetylase or defatty-acylase (demyristoylase and depalmitoylase) activity, depending on the context. Acts as a key histone deacetylase by catalyzing deacetylation of histone H3 at 'Lys-9', 'Lys-18' and 'Lys-56' (H3K9ac, H3K18ac and H3K56ac, respectively), suppressing target gene expression of several transcription factors, including NF-kappa-B. Acts as an inhibitor of transcription elongation by mediating deacetylation of H3K9ac and H3K56ac, preventing release of NELFE from chromatin and causing transcriptional pausing. Involved in DNA repair by promoting double-strand break (DSB) repair: acts as a DSB sensor by recognizing and binding DSB sites, leading to (1) recruitment of DNA repair proteins, such as SMARCA5/SNF2H, and (2) deacetylation of histone H3K9ac and H3K56ac. SIRT6 participation to DSB repair is probably involved in extension of life span. Also promotes DNA repair by deacetylating non-histone proteins, such as DDB2 and p53/TP53. Specifically deacetylates H3K18ac at pericentric heterochromatin, thereby maintaining pericentric heterochromatin silencing at centromeres and protecting against genomic instability and cellular senescence. Involved in telomere maintenance by catalyzing deacetylation of histone H3 in telomeric chromatin, regulating telomere position effect and telomere movement in response to DNA damage. Required for embryonic stem cell differentiation by mediating histone deacetylation of H3K9ac. Plays a major role in metabolism by regulating processes such as glycolysis, gluconeogenesis, insulin secretion and lipid metabolism. Inhibits glycolysis via histone deacetylase activity and by acting as a corepressor of the transcription factor HIF1A, thereby controlling the expression of multiple glycolytic genes. Has tumor suppressor activity by repressing glycolysis, thereby inhibiting the Warburg effect. Also regulates glycolysis and tumorigenesis by mediating deacetylation and nuclear export of non-histone proteins, such as isoform M2 of PKM (PKM2). Acts as a negative regulator of gluconeogenesis by mediating deacetylation of non-histone proteins, such as FOXO1 and KAT2A/GCN5. Promotes beta-oxidation of fatty acids during fasting by catalyzing deacetylation of NCOA2, inducing coactivation of PPARA. Acts as a regulator of lipid catabolism in brown adipocytes, both by catalyzing deacetylation of histones and non-histone proteins, such as FOXO1. Also acts as a regulator of circadian rhythms, both by regulating expression of clock-controlled genes involved in lipid and carbohydrate metabolism, and by catalyzing deacetylation of PER2. The defatty-acylase activity is specifically involved in regulation of protein secretion. Has high activity toward long-chain fatty acyl groups and mediates protein-lysine demyristoylation and depalmitoylation of target proteins, such as RRAS2 and TNF, thereby regulating their secretion. Also acts as a mono-ADP-ribosyltransferase by mediating mono-ADP-ribosylation of PARP1, TRIM28/KAP1 or SMARCC2/BAF170. Mono-ADP-ribosyltransferase activity is involved in DNA repair, cellular senescence, repression of LINE-1 retrotransposon elements and regulation of transcription. The protein is NAD-dependent protein deacylase sirtuin-6 of Homo sapiens (Human).